A 154-amino-acid polypeptide reads, in one-letter code: MAKKKSPGTLAENRKARHDYNIEDTIEAGIVLQGTEIKSIRRGSANLKDSYAQVKNGEMYLNNMHIAPYEEGNRFNHDPLRSRKLLLHKREIFKLGEQTREIGYSIVPLKLYLKHGHCKVLLGVARGKKKYDKRQALKEKAVKRDVARDMKARY.

This sequence belongs to the SmpB family.

Its subcellular location is the cytoplasm. Required for rescue of stalled ribosomes mediated by trans-translation. Binds to transfer-messenger RNA (tmRNA), required for stable association of tmRNA with ribosomes. tmRNA and SmpB together mimic tRNA shape, replacing the anticodon stem-loop with SmpB. tmRNA is encoded by the ssrA gene; the 2 termini fold to resemble tRNA(Ala) and it encodes a 'tag peptide', a short internal open reading frame. During trans-translation Ala-aminoacylated tmRNA acts like a tRNA, entering the A-site of stalled ribosomes, displacing the stalled mRNA. The ribosome then switches to translate the ORF on the tmRNA; the nascent peptide is terminated with the 'tag peptide' encoded by the tmRNA and targeted for degradation. The ribosome is freed to recommence translation, which seems to be the essential function of trans-translation. The sequence is that of SsrA-binding protein from Staphylococcus aureus (strain Mu3 / ATCC 700698).